Consider the following 80-residue polypeptide: MPKRILQGTVTSDKNEQTVTVLVERRFKHPLLKKTVRLSKKYRAHDPENQFKVGDIVRIEECAPISKTKRWKVVTDAVVA.

It belongs to the universal ribosomal protein uS17 family. Part of the 30S ribosomal subunit.

One of the primary rRNA binding proteins, it binds specifically to the 5'-end of 16S ribosomal RNA. This chain is Small ribosomal subunit protein uS17, found in Cereibacter sphaeroides (strain ATCC 17029 / ATH 2.4.9) (Rhodobacter sphaeroides).